We begin with the raw amino-acid sequence, 151 residues long: Putative pre-16S rRNA nuclease (151 aa).

This sequence belongs to the YqgF nuclease family.

Its subcellular location is the cytoplasm. Its function is as follows. Could be a nuclease involved in processing of the 5'-end of pre-16S rRNA. The chain is Putative pre-16S rRNA nuclease from Neisseria meningitidis serogroup B (strain ATCC BAA-335 / MC58).